The primary structure comprises 638 residues: Probable potassium transport system protein Kup (638 aa).

A run of 12 helical transmembrane segments spans residues 25 to 45, 65 to 85, 114 to 134, 152 to 172, 184 to 204, 226 to 246, 262 to 282, 291 to 311, 352 to 372, 382 to 402, 410 to 430, and 434 to 454; these read LAIA…LYSL, VISL…LLFV, AGAL…DAVI, PHLS…LFWI, FGPI…YHIV, LLQA…AEAL, AYGL…ALLI, PFFL…STVA, IYVP…VVGF, YGIA…VVMV, LLVG…FGAN, and VAQG…LLMT.

The protein belongs to the HAK/KUP transporter (TC 2.A.72) family.

The protein resides in the cell inner membrane. The catalysed reaction is K(+)(in) + H(+)(in) = K(+)(out) + H(+)(out). In terms of biological role, transport of potassium into the cell. Likely operates as a K(+):H(+) symporter. This Burkholderia cenocepacia (strain HI2424) protein is Probable potassium transport system protein Kup.